The following is a 448-amino-acid chain: Vitamin D3 receptor (448 aa).

The segment at residues 41-116 is a DNA-binding region (nuclear receptor); that stretch reads PRICGVCGDR…IGMMKEFILT (76 aa). Residues C44, C47, C61, C64, C80, C86, C96, and C99 each coordinate Zn(2+). 2 consecutive NR C4-type zinc fingers follow at residues 44–64 and 80–104; these read CGVC…CEGC and CPFS…LKRC. Residues 117-146 are hinge; sequence DEEVQRKREMILKRKEEEALKESLKPKLSE. Residues 147-444 enclose the NR LBD domain; it reads EQQKVINILL…LTPLVLEVFG (298 aa). S258 is a binding site for calcitriol. The interval 267 to 285 is interaction with coactivator LXXLL motif; it reads KMIPGFRDLTAEDQIALLK. Calcitriol contacts are provided by R295, S299, H326, and H418. Residues 437-445 carry the 9aaTAD motif; that stretch reads PLVLEVFGN.

It belongs to the nuclear hormone receptor family. NR1 subfamily. Homodimer in the absence of bound vitamin D3. Heterodimer with RXRA after vitamin D3 binding.

The protein localises to the nucleus. Its subcellular location is the cytoplasm. Nuclear receptor for calcitriol, the active form of vitamin D3 which mediates the action of this vitamin on cells. Enters the nucleus upon vitamin D3 binding where it forms heterodimers with the retinoid X receptor/RXR. The VDR-RXR heterodimers bind to specific response elements on DNA and activate the transcription of vitamin D3-responsive target genes. Plays a central role in calcium homeostasis. Also functions as a receptor for the secondary bile acid lithocholic acid (LCA) and its metabolites. The sequence is that of Vitamin D3 receptor (VDR) from Coturnix japonica (Japanese quail).